Consider the following 488-residue polypeptide: Glutamyl-tRNA(Gln) amidotransferase subunit A (488 aa).

Catalysis depends on charge relay system residues lysine 77 and serine 152. Residue serine 176 is the Acyl-ester intermediate of the active site.

The protein belongs to the amidase family. GatA subfamily. Heterotrimer of A, B and C subunits.

It catalyses the reaction L-glutamyl-tRNA(Gln) + L-glutamine + ATP + H2O = L-glutaminyl-tRNA(Gln) + L-glutamate + ADP + phosphate + H(+). In terms of biological role, allows the formation of correctly charged Gln-tRNA(Gln) through the transamidation of misacylated Glu-tRNA(Gln) in organisms which lack glutaminyl-tRNA synthetase. The reaction takes place in the presence of glutamine and ATP through an activated gamma-phospho-Glu-tRNA(Gln). The chain is Glutamyl-tRNA(Gln) amidotransferase subunit A from Streptococcus pneumoniae serotype 19F (strain G54).